A 126-amino-acid polypeptide reads, in one-letter code: UPF0344 protein ABC2900 (126 aa).

The next 4 membrane-spanning stretches (helical) occupy residues 16–36 (ASHEGSWAILAILFLVAYFLF), 43–63 (AGTIIHMIARLFFVIMLVTGA), 66–86 (LIAYQFAYFFFIKGILAVLLI), and 104–124 (GMLFAVLVVLVVIVLMGYGII).

This sequence belongs to the UPF0344 family.

It is found in the cell membrane. The sequence is that of UPF0344 protein ABC2900 from Shouchella clausii (strain KSM-K16) (Alkalihalobacillus clausii).